The primary structure comprises 91 residues: Small ribosomal subunit protein bS20 (91 aa).

A compositionally biased stretch (basic and acidic residues) spans methionine 1–asparagine 18. The tract at residues methionine 1–arginine 24 is disordered.

This sequence belongs to the bacterial ribosomal protein bS20 family.

Functionally, binds directly to 16S ribosomal RNA. The polypeptide is Small ribosomal subunit protein bS20 (Chlorobium phaeobacteroides (strain DSM 266 / SMG 266 / 2430)).